Here is a 536-residue protein sequence, read N- to C-terminus: MEAVNSTTSGFSSVLAGTKYANVNIPPQIDYVIEAVSNAGVWTWVFTLVALCIAYDQIAYIVRKGPIVGPAMKIPFIGPFLDSMDPRFDGYHAKWSSGPLSCVSIFHKFVVIASTRDMARKVFNSPAYVKPTVVDVAPKLLGHDNWVFLDGKAHVDFRKGLNGLFTRKALELYLPGQEEAYNTYFKHFLKMTKDAGGKPVPFMHEFREVMCAVSCRTFVGHYISDEAVTKIAEDYYLITAALELVNLPVILPYTKSWYGKKAADMVLAEFSKCAAKSKVRMAAGGEVTCIMDAWILSMIQSERWRKAEEKGEPHNVEKPSPLLRMFNDYEISQTIFTFLFASQDATSSAATWLFQVTAQRPDVLDRVREENIKIRNGDPNAPLTMDQLESLTYTRAVVRELLRWRPPVIMVPYVTKKAFPLTDDYTVPKGSMLIPTTFMALHDPEVYDNPSHFDPERYYSGDAEEKGSKNYLVFGTGPHYCLGQVYAQLNLALMIGKASVMLDWKHHATPKSEEIKVFATIFPMDDCPLTFEERKW.

The helical transmembrane segment at 41-61 (VWTWVFTLVALCIAYDQIAYI) threads the bilayer. A heme-binding site is contributed by Cys-481.

The protein belongs to the cytochrome P450 family. Heme is required as a cofactor.

It localises to the endoplasmic reticulum membrane. It catalyses the reaction 5-dehydroepisterol + NADPH + O2 + H(+) = ergosta-5,7,22,24(28)-tetraen-3beta-ol + NADP(+) + 2 H2O. Its pathway is steroid metabolism; ergosterol biosynthesis. Functionally, C-22 sterol desaturase; part of the third module of ergosterol biosynthesis pathway that includes the late steps of the pathway. ERG5A and ERG5B convert 5-dehydroepisterol into ergosta-5,7,22,24(28)-tetraen-3beta-ol by forming the C-22(23) double bond in the sterol side chain. The third module or late pathway involves the ergosterol synthesis itself through consecutive reactions that mainly occur in the endoplasmic reticulum (ER) membrane. Firstly, the squalene synthase ERG9 catalyzes the condensation of 2 farnesyl pyrophosphate moieties to form squalene, which is the precursor of all steroids. Squalene synthase is crucial for balancing the incorporation of farnesyl diphosphate (FPP) into sterol and nonsterol isoprene synthesis. Secondly, squalene is converted into lanosterol by the consecutive action of the squalene epoxidase ERG1 and the lanosterol synthase ERG7. Then, the delta(24)-sterol C-methyltransferase ERG6 methylates lanosterol at C-24 to produce eburicol. Eburicol is the substrate of the sterol 14-alpha demethylase encoded by CYP51A, CYP51B and CYP51C, to yield 4,4,24-trimethyl ergosta-8,14,24(28)-trienol. CYP51B encodes the enzyme primarily responsible for sterol 14-alpha-demethylation, and plays an essential role in ascospore formation. CYP51A encodes an additional sterol 14-alpha-demethylase, induced on ergosterol depletion and responsible for the intrinsic variation in azole sensitivity. The third CYP51 isoform, CYP51C, does not encode a sterol 14-alpha-demethylase, but is required for full virulence on host wheat ears. The C-14 reductase ERG24 then reduces the C14=C15 double bond which leads to 4,4-dimethylfecosterol. A sequence of further demethylations at C-4, involving the C-4 demethylation complex containing the C-4 methylsterol oxidases ERG25, the sterol-4-alpha-carboxylate 3-dehydrogenase ERG26 and the 3-keto-steroid reductase ERG27, leads to the production of fecosterol via 4-methylfecosterol. ERG28 has a role as a scaffold to help anchor ERG25, ERG26 and ERG27 to the endoplasmic reticulum. The C-8 sterol isomerase ERG2 then catalyzes the reaction which results in unsaturation at C-7 in the B ring of sterols and thus converts fecosterol to episterol. The sterol-C5-desaturases ERG3A and ERG3BB then catalyze the introduction of a C-5 double bond in the B ring to produce 5-dehydroepisterol. The C-22 sterol desaturases ERG5A and ERG5B further convert 5-dehydroepisterol into ergosta-5,7,22,24(28)-tetraen-3beta-ol by forming the C-22(23) double bond in the sterol side chain. Finally, ergosta-5,7,22,24(28)-tetraen-3beta-ol is substrate of the C-24(28) sterol reductase ERG4 to produce ergosterol. This is C-22 sterol desaturase ERG5A from Gibberella zeae (strain ATCC MYA-4620 / CBS 123657 / FGSC 9075 / NRRL 31084 / PH-1) (Wheat head blight fungus).